A 249-amino-acid chain; its full sequence is Probable transcriptional regulatory protein FN1661 (249 aa).

Positions 1–10 are enriched in polar residues; sequence MSGHSKWNNI. The tract at residues 1–20 is disordered; that stretch reads MSGHSKWNNIQHRKGAQDKK.

The protein belongs to the TACO1 family.

The protein localises to the cytoplasm. This chain is Probable transcriptional regulatory protein FN1661, found in Fusobacterium nucleatum subsp. nucleatum (strain ATCC 25586 / DSM 15643 / BCRC 10681 / CIP 101130 / JCM 8532 / KCTC 2640 / LMG 13131 / VPI 4355).